The primary structure comprises 73 residues: Putative antitoxin VapB9 (73 aa).

Functionally, antitoxin component of a possible type II toxin-antitoxin (TA) system. The cognate toxin is VapC9. In Mycobacterium tuberculosis (strain CDC 1551 / Oshkosh), this protein is Putative antitoxin VapB9 (vapB9).